Reading from the N-terminus, the 176-residue chain is COA8 family protein CG14806, mitochondrial (176 aa).

The N-terminal 23 residues, 1–23 (MNKCFRCQPRISLFQFSLPRCYA), are a transit peptide targeting the mitochondrion.

This sequence belongs to the COA8 family.

Its subcellular location is the mitochondrion inner membrane. Functionally, may be required for cytochrome c complex (COX) assembly and function, COX being the terminal component of the mitochondrial respiratory chain. (Microbial infection) Required for optimal replication of E.chaffeensis. This is COA8 family protein CG14806, mitochondrial from Drosophila melanogaster (Fruit fly).